The sequence spans 138 residues: Ribosome-binding factor A (138 aa).

The tract at residues 119–138 (DMDEKKNSDEKRDSDEKLED) is disordered.

The protein belongs to the RbfA family. As to quaternary structure, monomer. Binds 30S ribosomal subunits, but not 50S ribosomal subunits or 70S ribosomes.

Its subcellular location is the cytoplasm. Functionally, one of several proteins that assist in the late maturation steps of the functional core of the 30S ribosomal subunit. Associates with free 30S ribosomal subunits (but not with 30S subunits that are part of 70S ribosomes or polysomes). Required for efficient processing of 16S rRNA. May interact with the 5'-terminal helix region of 16S rRNA. This chain is Ribosome-binding factor A, found in Alkaliphilus metalliredigens (strain QYMF).